We begin with the raw amino-acid sequence, 34 residues long: Photosystem II reaction center protein M (34 aa).

Residues 7-27 (GFLATLLFVAVPMLFLIGLYI) form a helical membrane-spanning segment.

This sequence belongs to the PsbM family. As to quaternary structure, PSII is composed of 1 copy each of membrane proteins PsbA, PsbB, PsbC, PsbD, PsbE, PsbF, PsbH, PsbI, PsbJ, PsbK, PsbL, PsbM, PsbT, PsbX, PsbY, Psb30/Ycf12, peripheral proteins PsbO, CyanoQ (PsbQ), PsbU, PsbV and a large number of cofactors. It forms dimeric complexes.

Its subcellular location is the cellular thylakoid membrane. In terms of biological role, one of the components of the core complex of photosystem II (PSII). PSII is a light-driven water:plastoquinone oxidoreductase that uses light energy to abstract electrons from H(2)O, generating O(2) and a proton gradient subsequently used for ATP formation. It consists of a core antenna complex that captures photons, and an electron transfer chain that converts photonic excitation into a charge separation. This subunit is found at the monomer-monomer interface. In Prochlorococcus marinus (strain MIT 9303), this protein is Photosystem II reaction center protein M.